A 156-amino-acid chain; its full sequence is Ribosomal RNA large subunit methyltransferase H (156 aa).

S-adenosyl-L-methionine contacts are provided by residues L73, G104, and 123 to 128; that span reads LSALTL.

It belongs to the RNA methyltransferase RlmH family. Homodimer.

It is found in the cytoplasm. It catalyses the reaction pseudouridine(1915) in 23S rRNA + S-adenosyl-L-methionine = N(3)-methylpseudouridine(1915) in 23S rRNA + S-adenosyl-L-homocysteine + H(+). Its function is as follows. Specifically methylates the pseudouridine at position 1915 (m3Psi1915) in 23S rRNA. This Shewanella putrefaciens (strain CN-32 / ATCC BAA-453) protein is Ribosomal RNA large subunit methyltransferase H.